A 125-amino-acid chain; its full sequence is MSGPQNPQAGPGGPPSGPPQPGGPPGPPQGPPQPVQQSKRLQQTQAQVEEVVDIMRVNVDKVLERDSKISELDDRADALQAGASQFEASAGKLKRKFWWKNCKMMIILGGIVAVIVTVIIVWAAT.

A disordered region spans residues 1 to 46 (MSGPQNPQAGPGGPPSGPPQPGGPPGPPQGPPQPVQQSKRLQQTQA). Residues 1 to 103 (MSGPQNPQAG…KRKFWWKNCK (103 aa)) lie on the Cytoplasmic side of the membrane. Residues 12-34 (GGPPSGPPQPGGPPGPPQGPPQP) are compositionally biased toward pro residues. In terms of domain architecture, v-SNARE coiled-coil homology spans 40 to 100 (RLQQTQAQVE…GKLKRKFWWK (61 aa)). A helical; Anchor for type IV membrane protein membrane pass occupies residues 104-123 (MMIILGGIVAVIVTVIIVWA). The Vesicular portion of the chain corresponds to 124–125 (AT).

The protein belongs to the synaptobrevin family.

The protein resides in the cytoplasmic vesicle. Its subcellular location is the secretory vesicle. It is found in the synaptic vesicle membrane. The protein localises to the synapse. It localises to the synaptosome. Its function is as follows. Intrinsic membrane protein of small synaptic vesicles. This Doryteuthis pealeii (Longfin inshore squid) protein is Synaptobrevin.